The sequence spans 1056 residues: Carbamoyl phosphate synthase large chain (1056 aa).

The carboxyphosphate synthetic domain stretch occupies residues 1 to 401; that stretch reads MPKRTDIHKI…ALHKAVRSLE (401 aa). ATP-binding residues include Arg-129, Arg-169, Gly-175, Gly-176, Lys-208, Ile-210, Glu-215, Gly-241, Ile-242, His-243, Gln-284, and Glu-298. In terms of domain architecture, ATP-grasp 1 spans 133–327; the sequence is KELMNELGEP…IAKMAAKIAV (195 aa). Residues Gln-284, Glu-298, and Asn-300 each coordinate Mg(2+). Residues Gln-284, Glu-298, and Asn-300 each coordinate Mn(2+). Residues 402 to 546 form an oligomerization domain region; that stretch reads IDEKDLFSAE…YSAYDHENES (145 aa). The carbamoyl phosphate synthetic domain stretch occupies residues 547-929; the sequence is QRTKKPSILV…ALHKAFSGAH (383 aa). Residues 671 to 861 enclose the ATP-grasp 2 domain; it reads DQVITDLNLK…MAQVATRVIL (191 aa). ATP is bound by residues Arg-707, Ala-746, Leu-748, Glu-752, Gly-777, Val-778, His-779, Ser-780, Gln-820, and Glu-832. Residues Gln-820, Glu-832, and Asn-834 each contribute to the Mg(2+) site. 3 residues coordinate Mn(2+): Gln-820, Glu-832, and Asn-834. An MGS-like domain is found at 930–1056; it reads IQVPNDGKIL…DQSLEAITIK (127 aa). Residues 930–1056 form an allosteric domain region; the sequence is IQVPNDGKIL…DQSLEAITIK (127 aa).

Belongs to the CarB family. In terms of assembly, composed of two chains; the small (or glutamine) chain promotes the hydrolysis of glutamine to ammonia, which is used by the large (or ammonia) chain to synthesize carbamoyl phosphate. Tetramer of heterodimers (alpha,beta)4. The cofactor is Mg(2+). Mn(2+) is required as a cofactor.

The enzyme catalyses hydrogencarbonate + L-glutamine + 2 ATP + H2O = carbamoyl phosphate + L-glutamate + 2 ADP + phosphate + 2 H(+). It carries out the reaction hydrogencarbonate + NH4(+) + 2 ATP = carbamoyl phosphate + 2 ADP + phosphate + 2 H(+). Its pathway is amino-acid biosynthesis; L-arginine biosynthesis; carbamoyl phosphate from bicarbonate: step 1/1. It participates in pyrimidine metabolism; UMP biosynthesis via de novo pathway; (S)-dihydroorotate from bicarbonate: step 1/3. In terms of biological role, large subunit of the glutamine-dependent carbamoyl phosphate synthetase (CPSase). CPSase catalyzes the formation of carbamoyl phosphate from the ammonia moiety of glutamine, carbonate, and phosphate donated by ATP, constituting the first step of 2 biosynthetic pathways, one leading to arginine and/or urea and the other to pyrimidine nucleotides. The large subunit (synthetase) binds the substrates ammonia (free or transferred from glutamine from the small subunit), hydrogencarbonate and ATP and carries out an ATP-coupled ligase reaction, activating hydrogencarbonate by forming carboxy phosphate which reacts with ammonia to form carbamoyl phosphate. The polypeptide is Carbamoyl phosphate synthase large chain (Limosilactobacillus reuteri (strain DSM 20016) (Lactobacillus reuteri)).